The following is a 310-amino-acid chain: ADP-L-glycero-D-manno-heptose-6-epimerase (310 aa).

Residues 10–11, 31–32, Lys-38, Lys-53, 75–79, and Asn-92 contribute to the NADP(+) site; these read FI, DN, and EGACS. The active-site Proton acceptor is Tyr-140. Lys-144 contacts NADP(+). A substrate-binding site is contributed by Asn-169. The NADP(+) site is built by Val-170 and Lys-178. The active-site Proton acceptor is the Lys-178. Substrate contacts are provided by residues Ser-180, His-187, 201–204, Arg-209, and Tyr-272; that span reads FEGS.

It belongs to the NAD(P)-dependent epimerase/dehydratase family. HldD subfamily. In terms of assembly, homopentamer. Requires NADP(+) as cofactor.

It catalyses the reaction ADP-D-glycero-beta-D-manno-heptose = ADP-L-glycero-beta-D-manno-heptose. The protein operates within nucleotide-sugar biosynthesis; ADP-L-glycero-beta-D-manno-heptose biosynthesis; ADP-L-glycero-beta-D-manno-heptose from D-glycero-beta-D-manno-heptose 7-phosphate: step 4/4. In terms of biological role, catalyzes the interconversion between ADP-D-glycero-beta-D-manno-heptose and ADP-L-glycero-beta-D-manno-heptose via an epimerization at carbon 6 of the heptose. This is ADP-L-glycero-D-manno-heptose-6-epimerase from Salmonella paratyphi C (strain RKS4594).